The sequence spans 362 residues: UDP-galactose transporter homolog 1 (362 aa).

5 helical membrane-spanning segments follow: residues 7–27 (IFPV…WALV), 45–65 (CPNV…YFYM), 111–131 (LTYM…HLII), 141–161 (SVVA…GSKG), and 175–195 (FFQK…DGLT). An N-linked (GlcNAc...) asparagine glycan is attached at Asn196. 4 consecutive transmembrane segments (helical) span residues 234–254 (HMMF…LLVI), 271–291 (IIVS…CFIF), 296–316 (LYGS…SMLL), and 317–337 (SIIV…VIVF).

Belongs to the nucleotide-sugar transporter family. SLC35B subfamily.

It is found in the endoplasmic reticulum membrane. Functionally, may be involved in specific transport of UDP-Gal from the cytosol to the Golgi lumen. Involved in the maintenance of optimal conditions for the folding of secretory pathway proteins in the endoplasmic reticulum. This chain is UDP-galactose transporter homolog 1 (HUT1), found in Candida glabrata (strain ATCC 2001 / BCRC 20586 / JCM 3761 / NBRC 0622 / NRRL Y-65 / CBS 138) (Yeast).